The primary structure comprises 349 residues: Alanine racemase (349 aa).

The active-site Proton acceptor; specific for D-alanine is the lysine 35. Lysine 35 is subject to N6-(pyridoxal phosphate)lysine. Arginine 130 contacts substrate. The active-site Proton acceptor; specific for L-alanine is tyrosine 244. Methionine 292 provides a ligand contact to substrate.

This sequence belongs to the alanine racemase family. Pyridoxal 5'-phosphate serves as cofactor.

The enzyme catalyses L-alanine = D-alanine. It functions in the pathway amino-acid biosynthesis; D-alanine biosynthesis; D-alanine from L-alanine: step 1/1. Its function is as follows. Catalyzes the interconversion of L-alanine and D-alanine. May also act on other amino acids. The polypeptide is Alanine racemase (alr) (Dinoroseobacter shibae (strain DSM 16493 / NCIMB 14021 / DFL 12)).